Here is a 961-residue protein sequence, read N- to C-terminus: Cytochrome b5-like reductase apf12 (961 aa).

Alanine 298 lines the FAD pocket. One can recognise an FAD-binding FR-type domain in the interval 429–548 (ARPQVDAFAW…IKPAPHFRIA (120 aa)). NADP(+) contacts are provided by residues 453 to 456 (SRIQ), 499 to 500 (SK), and glycine 753. One can recognise a Cytochrome b5 heme-binding domain in the interval 716–793 (LNQITKLELA…LNEMVIGRLD (78 aa)). 753-755 (GGE) contacts FAD.

This sequence belongs to the flavoprotein pyridine nucleotide cytochrome reductase family. The cofactor is FAD.

Its pathway is secondary metabolite biosynthesis. Functionally, cytochrome b5-like reductase; part of the gene cluster that mediates the biosynthesis of the cyclic tetrapeptide apicidin F (APF). The non-ribosomal peptide synthetase apf1 incorporates four different amino acids to produce apicidin F: L-phenylalanine, D-pipecolic acid (D-pip), N-methoxy-L-tryptophan and L-2-aminooctanedioic acid. L-Phenylalanine is the only proteinogenic amino acid directly used by apf1. The 3 other apf1 substrates are non-proteinogenic and have to be modified by other enzymes of the cluster. Lysine is converted to delta-1-pyrroline-5-carboxylate (P5C) which is reduced to L-pipecolic acid (L-pip) by apf3. L-pip is epimerized to D-pip, probably by apf1 activity, prior to incorporation. L-Tryptophan is N-oxidyzed by one of the cytochrome P450 monooxygenases (apf7 or apf8), and further methylated at the hydroxy group by the O-methyltransferase apf6 to yield N-methoxy-L-tryptophan. The synthesis of the fourth apf1 substrate is more complex. The fatty acid synthase apf5 is involved in the synthesis of the octanoic acid backbone of L-2-aminooctanedioic acid by fixing one acetyl-CoA unit and three malonyl-CoA units. Then one of the cytochrome P450 monooxygenases (apf7 or apf8) may oxidize this backbone to 2-oxooctanoic acid. The aminotransferase apf4 is predicted to catalyze the exchange of the keto group with an amino group. The next step would be the oxidation of 2-aminooctanoic acid by one of the cytochrome P450 monooxygenases (apf7 or apf8). The last step is the oxidation of 2-amino-8-hydroxyoctanoic acid to 2-aminooctanedioic acid is catalyzed by the FAD-dependent monooxygenase apf9. In Gibberella fujikuroi (strain CBS 195.34 / IMI 58289 / NRRL A-6831) (Bakanae and foot rot disease fungus), this protein is Cytochrome b5-like reductase apf12.